The chain runs to 688 residues: Two-component response regulator ORR23 (688 aa).

Residues 25–140 (RVLAVDDDPV…ELRNIWQHVI (116 aa)) enclose the Response regulatory domain. The residue at position 76 (aspartate 76) is a 4-aspartylphosphate. Residues 161–212 (PPNADSDHVHGHVTCGSPDQSGRPSKKRKEYCSEEEDEGEVNTQDIDDPSAP) are disordered. Residues 193–208 (SEEEDEGEVNTQDIDD) show a composition bias toward acidic residues. The myb-like GARP DNA-binding region spans 211 to 270 (APKKPRVVWSVELHRKFVAAVNQLGIDKAVPKRILELMNVEKLTRENVASHLQKYRLYLK).

The protein belongs to the ARR family. Type-B subfamily. Post-translationally, two-component system major event consists of a His-to-Asp phosphorelay between a sensor histidine kinase (HK) and a response regulator (RR). In plants, the His-to-Asp phosphorelay involves an additional intermediate named Histidine-containing phosphotransfer protein (HPt). This multistep phosphorelay consists of a His-Asp-His-Asp sequential transfer of a phosphate group between first a His and an Asp of the HK protein, followed by the transfer to a conserved His of the HPt protein and finally the transfer to an Asp in the receiver domain of the RR protein.

Its subcellular location is the nucleus. Functionally, transcriptional activator that binds specific DNA sequence. Functions as a response regulator involved in His-to-Asp phosphorelay signal transduction system. Phosphorylation of the Asp residue in the receiver domain activates the ability of the protein to promote the transcription of target genes. May directly activate some type-A response regulators in response to cytokinins. This Oryza sativa subsp. indica (Rice) protein is Two-component response regulator ORR23.